A 283-amino-acid polypeptide reads, in one-letter code: 4-diphosphocytidyl-2-C-methyl-D-erythritol kinase (283 aa).

The active site involves Lys10. 95–105 (PVAAGLGGGSS) lines the ATP pocket. Asp137 is a catalytic residue.

This sequence belongs to the GHMP kinase family. IspE subfamily.

It catalyses the reaction 4-CDP-2-C-methyl-D-erythritol + ATP = 4-CDP-2-C-methyl-D-erythritol 2-phosphate + ADP + H(+). It participates in isoprenoid biosynthesis; isopentenyl diphosphate biosynthesis via DXP pathway; isopentenyl diphosphate from 1-deoxy-D-xylulose 5-phosphate: step 3/6. In terms of biological role, catalyzes the phosphorylation of the position 2 hydroxy group of 4-diphosphocytidyl-2C-methyl-D-erythritol. In Limosilactobacillus reuteri (strain DSM 20016) (Lactobacillus reuteri), this protein is 4-diphosphocytidyl-2-C-methyl-D-erythritol kinase.